The following is a 1012-amino-acid chain: Translation initiation factor IF-2, chloroplastic (1012 aa).

Residues 75–102 (GNSVSLDSNSNSSSSSKSGGDDGTGFVL) show a composition bias toward low complexity. Disordered stretches follow at residues 75–132 (GNSV…VEER), 147–294 (EKLG…KEKK), and 319–340 (APPK…RKKG). The span at 152–175 (SKVNGDKNNGSVNKPVRNNANASP) shows a compositional bias: polar residues. Positions 183-194 (SAASLKSKTLKS) are enriched in low complexity. A compositionally biased stretch (basic and acidic residues) spans 208–231 (VVKEVPKPSYNKNEEEKSQTRGGE). The segment covering 240 to 257 (PQPPSKPQPLKPQQPSKP) has biased composition (pro residues). The span at 277–294 (VLRDKGAAETSVKSKEKK) shows a compositional bias: basic and acidic residues. The 174-residue stretch at 488–661 (DRPPVITIMG…MLVAELQELK (174 aa)) folds into the tr-type G domain. Positions 497–504 (GHVDHGKT) are G1. 497–504 (GHVDHGKT) contacts GTP. A G2 region spans residues 522–526 (GITQG). The segment at 547 to 550 (DTPG) is G3. GTP contacts are provided by residues 547–551 (DTPGH) and 601–604 (NKID). The G4 stretch occupies residues 601–604 (NKID). The tract at residues 637 to 639 (SAL) is G5.

The protein belongs to the TRAFAC class translation factor GTPase superfamily. Classic translation factor GTPase family. IF-2 subfamily.

The protein localises to the plastid. The protein resides in the chloroplast. Its function is as follows. One of the essential components for the initiation of protein synthesis. Protects formylmethionyl-tRNA from spontaneous hydrolysis and promotes its binding to the 30S ribosomal subunits. Also involved in the hydrolysis of GTP during the formation of the 70S ribosomal complex. The chain is Translation initiation factor IF-2, chloroplastic (IF2CP) from Phaseolus vulgaris (Kidney bean).